A 133-amino-acid chain; its full sequence is Ribosome-binding factor A (133 aa).

Belongs to the RbfA family. In terms of assembly, monomer. Binds 30S ribosomal subunits, but not 50S ribosomal subunits or 70S ribosomes.

Its subcellular location is the cytoplasm. Functionally, one of several proteins that assist in the late maturation steps of the functional core of the 30S ribosomal subunit. Associates with free 30S ribosomal subunits (but not with 30S subunits that are part of 70S ribosomes or polysomes). Required for efficient processing of 16S rRNA. May interact with the 5'-terminal helix region of 16S rRNA. This chain is Ribosome-binding factor A, found in Salmonella typhimurium (strain LT2 / SGSC1412 / ATCC 700720).